The chain runs to 190 residues: ATP synthase subunit delta (190 aa).

It belongs to the ATPase delta chain family. In terms of assembly, F-type ATPases have 2 components, F(1) - the catalytic core - and F(0) - the membrane proton channel. F(1) has five subunits: alpha(3), beta(3), gamma(1), delta(1), epsilon(1). F(0) has three main subunits: a(1), b(2) and c(10-14). The alpha and beta chains form an alternating ring which encloses part of the gamma chain. F(1) is attached to F(0) by a central stalk formed by the gamma and epsilon chains, while a peripheral stalk is formed by the delta and b chains.

Its subcellular location is the cell inner membrane. In terms of biological role, f(1)F(0) ATP synthase produces ATP from ADP in the presence of a proton or sodium gradient. F-type ATPases consist of two structural domains, F(1) containing the extramembraneous catalytic core and F(0) containing the membrane proton channel, linked together by a central stalk and a peripheral stalk. During catalysis, ATP synthesis in the catalytic domain of F(1) is coupled via a rotary mechanism of the central stalk subunits to proton translocation. This protein is part of the stalk that links CF(0) to CF(1). It either transmits conformational changes from CF(0) to CF(1) or is implicated in proton conduction. The protein is ATP synthase subunit delta of Beijerinckia indica subsp. indica (strain ATCC 9039 / DSM 1715 / NCIMB 8712).